A 135-amino-acid chain; its full sequence is Small ribosomal subunit protein uS11 (135 aa).

A compositionally biased stretch (polar residues) spans 1 to 10 (MPPKSRTATA). 2 disordered regions span residues 1-27 (MPPK…HGHA) and 114-135 (GAIQ…RRRV). The segment covering 12-27 (RKPRRKEKKNVAHGHA) has biased composition (basic residues).

The protein belongs to the universal ribosomal protein uS11 family. In terms of assembly, part of the 30S ribosomal subunit. Interacts with proteins S7 and S18. Binds to IF-3.

Its function is as follows. Located on the platform of the 30S subunit, it bridges several disparate RNA helices of the 16S rRNA. Forms part of the Shine-Dalgarno cleft in the 70S ribosome. The protein is Small ribosomal subunit protein uS11 of Kineococcus radiotolerans (strain ATCC BAA-149 / DSM 14245 / SRS30216).